The following is a 1089-amino-acid chain: Platelet-derived growth factor receptor alpha (1089 aa).

Residues 1-23 form the signal peptide; that stretch reads MGTSHPAFLVLGCLLTGLSLILC. Ig-like C2-type domains are found at residues 24–113, 117–201, 202–306, 319–410, and 414–517; these read QLSL…NELE, IYIY…FQTI, PFNV…KKVT, PTFS…FELL, and PSSI…LKLV. Topologically, residues 24–528 are extracellular; that stretch reads QLSLPSILPN…PTLRSELTVA (505 aa). Asn-42, Asn-76, Asn-103, and Asn-179 each carry an N-linked (GlcNAc...) asparagine glycan. An intrachain disulfide couples Cys-49 to Cys-100. Intrachain disulfides connect Cys-150–Cys-189 and Cys-235–Cys-290. Residues Asn-353, Asn-359, Asn-458, and Asn-468 are each glycosylated (N-linked (GlcNAc...) asparagine). Cys-435 and Cys-501 are joined by a disulfide. A helical membrane pass occupies residues 529 to 549; sequence AAVLVLLVIVIISLIVLVVIW. Residues 550–1089 are Cytoplasmic-facing; that stretch reads KQKPRYEIRW…SSDLVEDSFL (540 aa). A phosphotyrosine; by autocatalysis mark is found at Tyr-572 and Tyr-574. Residues 593-954 form the Protein kinase domain; that stretch reads LVLGRVLGSG…HLSEIVENLL (362 aa). ATP contacts are provided by residues 599–607 and Lys-627; that span reads LGSGAFGKV. 6 positions are modified to phosphotyrosine; by autocatalysis: Tyr-720, Tyr-731, Tyr-742, Tyr-754, Tyr-762, and Tyr-768. The Proton acceptor role is filled by Asp-818. Phosphotyrosine; by autocatalysis occurs at positions 849, 988, and 1018. The segment at 1018 to 1089 is disordered; it reads YIIPLPDIDP…SSDLVEDSFL (72 aa). Polar residues predominate over residues 1041-1059; that stretch reads SSQTSEESAIETGSSSSTF. Residues 1065–1089 show a composition bias toward acidic residues; the sequence is ETIEDIDMMDDIGIDSSDLVEDSFL.

Belongs to the protein kinase superfamily. Tyr protein kinase family. CSF-1/PDGF receptor subfamily. In terms of assembly, interacts with homodimeric PDGFA, PDGFB and PDGFC, and with heterodimers formed by PDGFA and PDGFB. Monomer in the absence of bound ligand. Interaction with dimeric PDGFA, PDGFB and/or PDGFC leads to receptor dimerization, where both PDGFRA homodimers and heterodimers with PDGFRB are observed. Interacts (tyrosine phosphorylated) with SHB (via SH2 domain). Interacts (tyrosine phosphorylated) with SHF (via SH2 domain). Interacts (tyrosine phosphorylated) with SRC (via SH2 domain). Interacts (tyrosine phosphorylated) with PIK3R1. Interacts (tyrosine phosphorylated) with PLCG1 (via SH2 domain). Interacts (tyrosine phosphorylated) with CRK, GRB2 and GRB7. Interacts with CD248; this interaction promotes PDGF receptor signaling pathway. As to quaternary structure, (Microbial infection) Interacts with human cytomegalovirus/HHV-5 envelope glycoprotein B/gB. Also interacts with the trimeric complex gH-gL-gO. Trimer-PDGFRA interaction has an inhibitory effect on PDGFRA signaling. Post-translationally, N-glycosylated. In terms of processing, ubiquitinated, leading to its internalization and degradation. Autophosphorylated on tyrosine residues upon ligand binding. Autophosphorylation occurs in trans, i.e. one subunit of the dimeric receptor phosphorylates tyrosine residues on the other subunit. Phosphorylation at Tyr-731 and Tyr-742 is important for interaction with PIK3R1. Phosphorylation at Tyr-720 and Tyr-754 is important for interaction with PTPN11. Phosphorylation at Tyr-762 is important for interaction with CRK. Phosphorylation at Tyr-572 and Tyr-574 is important for interaction with SRC and SRC family members. Phosphorylation at Tyr-988 and Tyr-1018 is important for interaction with PLCG1. In terms of tissue distribution, detected in platelets (at protein level). Widely expressed. Detected in brain, fibroblasts, smooth muscle, heart, and embryo. Expressed in primary and metastatic colon tumors and in normal colon tissue.

The protein localises to the cell membrane. It localises to the cell projection. It is found in the cilium. The protein resides in the golgi apparatus. The enzyme catalyses L-tyrosyl-[protein] + ATP = O-phospho-L-tyrosyl-[protein] + ADP + H(+). With respect to regulation, present in an inactive conformation in the absence of bound ligand. Binding of PDGFA and/or PDGFB leads to dimerization and activation by autophosphorylation on tyrosine residues. Inhibited by imatinib, nilotinib and sorafenib. Its function is as follows. Tyrosine-protein kinase that acts as a cell-surface receptor for PDGFA, PDGFB and PDGFC and plays an essential role in the regulation of embryonic development, cell proliferation, survival and chemotaxis. Depending on the context, promotes or inhibits cell proliferation and cell migration. Plays an important role in the differentiation of bone marrow-derived mesenchymal stem cells. Required for normal skeleton development and cephalic closure during embryonic development. Required for normal development of the mucosa lining the gastrointestinal tract, and for recruitment of mesenchymal cells and normal development of intestinal villi. Plays a role in cell migration and chemotaxis in wound healing. Plays a role in platelet activation, secretion of agonists from platelet granules, and in thrombin-induced platelet aggregation. Binding of its cognate ligands - homodimeric PDGFA, homodimeric PDGFB, heterodimers formed by PDGFA and PDGFB or homodimeric PDGFC -leads to the activation of several signaling cascades; the response depends on the nature of the bound ligand and is modulated by the formation of heterodimers between PDGFRA and PDGFRB. Phosphorylates PIK3R1, PLCG1, and PTPN11. Activation of PLCG1 leads to the production of the cellular signaling molecules diacylglycerol and inositol 1,4,5-trisphosphate, mobilization of cytosolic Ca(2+) and the activation of protein kinase C. Phosphorylates PIK3R1, the regulatory subunit of phosphatidylinositol 3-kinase, and thereby mediates activation of the AKT1 signaling pathway. Mediates activation of HRAS and of the MAP kinases MAPK1/ERK2 and/or MAPK3/ERK1. Promotes activation of STAT family members STAT1, STAT3 and STAT5A and/or STAT5B. Receptor signaling is down-regulated by protein phosphatases that dephosphorylate the receptor and its down-stream effectors, and by rapid internalization of the activated receptor. This is Platelet-derived growth factor receptor alpha (PDGFRA) from Homo sapiens (Human).